Reading from the N-terminus, the 801-residue chain is Elongation factor G, mitochondrial (801 aa).

The transit peptide at 1–65 (MRVQSLLRAQ…QKIQNQRRWQ (65 aa)) directs the protein to the mitochondrion. The region spanning 100 to 387 (SRVRNIGIAA…AVCDYLPNPS (288 aa)) is the tr-type G domain. GTP-binding positions include 109-116 (AHIDSGKT), 185-189 (DTPGH), and 239-242 (NKMD).

Belongs to the TRAFAC class translation factor GTPase superfamily. Classic translation factor GTPase family. EF-G/EF-2 subfamily.

Its subcellular location is the mitochondrion. The protein operates within protein biosynthesis; polypeptide chain elongation. Its function is as follows. Mitochondrial GTPase that catalyzes the GTP-dependent ribosomal translocation step during translation elongation. During this step, the ribosome changes from the pre-translocational (PRE) to the post-translocational (POST) state as the newly formed A-site-bound peptidyl-tRNA and P-site-bound deacylated tRNA move to the P and E sites, respectively. Catalyzes the coordinated movement of the two tRNA molecules, the mRNA and conformational changes in the ribosome. In Pyrenophora tritici-repentis (strain Pt-1C-BFP) (Wheat tan spot fungus), this protein is Elongation factor G, mitochondrial (mef1).